The chain runs to 555 residues: Phosphoglucomutase (555 aa).

Residues Thr-45, Arg-49, Ser-148–His-149, and Lys-158 each bind substrate. Residue Ser-148 is the Phosphoserine intermediate of the active site. Ser-148 is a binding site for Mg(2+). The Mg(2+) site is built by Asp-306, Asp-308, and Asp-310. Residues Asp-310 to Arg-311 and Glu-393 to Ser-395 contribute to the substrate site.

The protein belongs to the phosphohexose mutase family. Requires Mg(2+) as cofactor.

It catalyses the reaction alpha-D-glucose 1-phosphate = alpha-D-glucose 6-phosphate. Its function is as follows. This enzyme participates in both the breakdown and synthesis of glucose. The protein is Phosphoglucomutase (celB) of Komagataeibacter xylinus (Gluconacetobacter xylinus).